Here is a 400-residue protein sequence, read N- to C-terminus: AA13 family lytic polysaccharide monooxygenase A (400 aa).

The signal sequence occupies residues methionine 1–glycine 17. Histidine 18 provides a ligand contact to Cu(2+). Histidine 18 is modified (methylhistidine). In terms of domain architecture, Chitin-binding type-4 spans histidine 18 to isoleucine 247. 7 cysteine pairs are disulfide-bonded: cysteine 39–cysteine 42, cysteine 65–cysteine 244, cysteine 101–cysteine 202, cysteine 117–cysteine 144, cysteine 152–cysteine 160, cysteine 166–cysteine 172, and cysteine 180–cysteine 191. Cu(2+) is bound at residue histidine 108. N-linked (GlcNAc...) asparagine glycosylation occurs at asparagine 119. Residue tyrosine 241 participates in Cu(2+) binding. Residues glycine 254 to threonine 287 are disordered. Residues threonine 257–threonine 287 are compositionally biased toward low complexity. The CBM20 domain occupies threonine 293–arginine 400. An N-linked (GlcNAc...) asparagine glycan is attached at asparagine 379.

Belongs to the polysaccharide monooxygenase AA13 family. The cofactor is Cu(2+). O-mannosylated.

The protein resides in the secreted. It catalyses the reaction starch + reduced acceptor + O2 = D-glucono-1,5-lactone-terminated malto-oligosaccharides + short-chain malto-oligosaccharides + acceptor + H2O.. Its activity is regulated as follows. Activity is inhibited by both beta-cyclodextrin or amylose that block the access to the active site. Its function is as follows. Starch-active lytic polysaccharide monooxygenase that oxidizes the C1 position of starch substrates. Catalysis by LPMOs requires the reduction of the active-site copper from Cu(II) to Cu(I) by a reducing agent and H(2)O(2) or O(2) as a cosubstrate. The sequence is that of AA13 family lytic polysaccharide monooxygenase A from Aspergillus terreus (strain NIH 2624 / FGSC A1156).